The following is a 542-amino-acid chain: Valine N-monooxygenase 1 (542 aa).

Residues methionine 1 to serine 21 lie on the Cytoplasmic side of the membrane. A helical; Signal-anchor for type II membrane protein membrane pass occupies residues serine 22–valine 42. The Lumenal portion of the chain corresponds to lysine 43–proline 542. N-linked (GlcNAc...) asparagine glycosylation is present at asparagine 278. A heme-binding site is contributed by cysteine 478. Asparagine 506 is a glycosylation site (N-linked (GlcNAc...) asparagine).

This sequence belongs to the cytochrome P450 family. Requires heme as cofactor. As to expression, expressed in the epidermis, the next two cortex cell layers, the endodermis and the pericycle of leaf petioles. Strong expression around the laticifers among the phloem cells and in parenchymatic cells between the protoxylem and the metaxylem cells. In the leaves, preferentially expressed in the mesophyll cells adjacent to the epidermis.

Its subcellular location is the microsome membrane. It carries out the reaction L-valine + 2 reduced [NADPH--hemoprotein reductase] + 2 O2 = (E)-2-methylpropanal oxime + 2 oxidized [NADPH--hemoprotein reductase] + CO2 + 3 H2O + 2 H(+). It catalyses the reaction L-valine + reduced [NADPH--hemoprotein reductase] + O2 = N-hydroxy-L-valine + oxidized [NADPH--hemoprotein reductase] + H2O + 2 H(+). The catalysed reaction is N-hydroxy-L-valine + reduced [NADPH--hemoprotein reductase] + O2 = N,N-dihydroxy-L-valine + oxidized [NADPH--hemoprotein reductase] + H2O + H(+). The enzyme catalyses L-isoleucine + 2 reduced [NADPH--hemoprotein reductase] + 2 O2 = (1E,2S)-2-methylbutanal oxime + 2 oxidized [NADPH--hemoprotein reductase] + CO2 + 3 H2O + 2 H(+). It carries out the reaction L-isoleucine + reduced [NADPH--hemoprotein reductase] + O2 = N-hydroxy-L-isoleucine + oxidized [NADPH--hemoprotein reductase] + H2O + 2 H(+). It catalyses the reaction N-hydroxy-L-isoleucine + reduced [NADPH--hemoprotein reductase] + O2 = N,N-dihydroxy-L-isoleucine + oxidized [NADPH--hemoprotein reductase] + H2O + H(+). The protein operates within secondary metabolite biosynthesis. Its activity is regulated as follows. Inhibited by tetcyclasis but not by 1-aminobenzotriazole (ABT). Its function is as follows. Involved in the biosynthesis of the cyanogenic glucosides linamarin and lotaustralin. Can use L-valine or L-isoleucine as substrate, but not L-leucine, L-phenylalanine, L-tyrosine, D-valine or D-isoleucine. Catalyzes multi-step reactions starting with two successive N-hydroxylations using L-valine and L-isoleucine as substrates leading to the formation of N,N-dihydroxy-L-valine and N,N-dihydroxy-L-isoleucine, respectively; following spontaneous reactions lead to the production of (E)-2-methylpropanal oxime and (1E,2S)-2-methylbutanal oxime, respectively. This is Valine N-monooxygenase 1 from Manihot esculenta (Cassava).